The chain runs to 402 residues: CinA-like protein (402 aa).

The protein belongs to the CinA family.

The sequence is that of CinA-like protein from Deinococcus deserti (strain DSM 17065 / CIP 109153 / LMG 22923 / VCD115).